Consider the following 224-residue polypeptide: Protein-L-isoaspartate O-methyltransferase (224 aa).

Ser63 is an active-site residue.

It belongs to the methyltransferase superfamily. L-isoaspartyl/D-aspartyl protein methyltransferase family.

Its subcellular location is the cytoplasm. The enzyme catalyses [protein]-L-isoaspartate + S-adenosyl-L-methionine = [protein]-L-isoaspartate alpha-methyl ester + S-adenosyl-L-homocysteine. Catalyzes the methyl esterification of L-isoaspartyl residues in peptides and proteins that result from spontaneous decomposition of normal L-aspartyl and L-asparaginyl residues. It plays a role in the repair and/or degradation of damaged proteins. The polypeptide is Protein-L-isoaspartate O-methyltransferase (Herpetosiphon aurantiacus (strain ATCC 23779 / DSM 785 / 114-95)).